A 534-amino-acid polypeptide reads, in one-letter code: Lariat debranching enzyme (534 aa).

Residues Cys8, His10, Asp39, and Asn84 each coordinate a divalent metal cation. Residues 124 to 154 (SGIFKGHDFLRGHHEFPPYTDSTCRSVYHVR) are lariat recognition loop. Residues His174, His226, and His228 each contribute to the a divalent metal cation site. 2 disordered regions span residues 242 to 275 (KLGD…PPPS) and 501 to 534 (TETP…AQED).

Belongs to the lariat debranching enzyme family. It depends on Fe(2+) as a cofactor. Zn(2+) serves as cofactor. Requires Mn(2+) as cofactor.

The protein localises to the nucleus. With respect to regulation, active in presence of diverse metals including Fe(2+), Zn(2+), Mn(2+). Binds two metal cations in two adjacent alpha and beta metal-binding pockets. Its function is as follows. Cleaves the 2'-5' phosphodiester linkage at the branch point of lariat intron pre-mRNAs after splicing and converts them into linear molecules that are subsequently degraded. It thereby facilitates ribonucleotide turnover. This Drosophila melanogaster (Fruit fly) protein is Lariat debranching enzyme (ldbr).